Here is a 162-residue protein sequence, read N- to C-terminus: Phosphopantetheine adenylyltransferase (162 aa).

Residue S11 coordinates substrate. Residues 11-12 and H19 contribute to the ATP site; that span reads SF. Substrate is bound by residues K43, T75, and R89. Residues 90–92, E100, and 125–131 contribute to the ATP site; these read GLR and YAFLSSS.

This sequence belongs to the bacterial CoaD family. Homohexamer. Requires Mg(2+) as cofactor.

It localises to the cytoplasm. It catalyses the reaction (R)-4'-phosphopantetheine + ATP + H(+) = 3'-dephospho-CoA + diphosphate. It participates in cofactor biosynthesis; coenzyme A biosynthesis; CoA from (R)-pantothenate: step 4/5. Reversibly transfers an adenylyl group from ATP to 4'-phosphopantetheine, yielding dephospho-CoA (dPCoA) and pyrophosphate. This chain is Phosphopantetheine adenylyltransferase, found in Finegoldia magna (strain ATCC 29328 / DSM 20472 / WAL 2508) (Peptostreptococcus magnus).